Consider the following 185-residue polypeptide: dTTP/UTP pyrophosphatase (185 aa).

Residue D64 is the Proton acceptor of the active site.

The protein belongs to the Maf family. YhdE subfamily. A divalent metal cation serves as cofactor.

The protein resides in the cytoplasm. The catalysed reaction is dTTP + H2O = dTMP + diphosphate + H(+). The enzyme catalyses UTP + H2O = UMP + diphosphate + H(+). Functionally, nucleoside triphosphate pyrophosphatase that hydrolyzes dTTP and UTP. May have a dual role in cell division arrest and in preventing the incorporation of modified nucleotides into cellular nucleic acids. The sequence is that of dTTP/UTP pyrophosphatase from Thermococcus gammatolerans (strain DSM 15229 / JCM 11827 / EJ3).